The following is an 824-amino-acid chain: Translation initiation factor IF-2 (824 aa).

Positions 1–234 are disordered; that stretch reads MSDQDGKKPL…RQKAMGGSVD (234 aa). Basic and acidic residues-rich tracts occupy residues 59–75 and 82–144; these read GGKR…DRRL and KARE…RRNA. A compositionally biased stretch (low complexity) spans 145–159; that stretch reads PPEAAAPAVDPAAAA. Positions 170–186 are enriched in basic and acidic residues; it reads ARREPERDNKRENRSRG. In terms of domain architecture, tr-type G spans 321 to 491; that stretch reads PRPPVITIMG…ALQAELLELK (171 aa). Positions 330–337 are G1; sequence GHVDHGKT. 330–337 serves as a coordination point for GTP; sequence GHVDHGKT. The segment at 355 to 359 is G2; it reads GITQH. The tract at residues 377 to 380 is G3; sequence DTPG. GTP contacts are provided by residues 377 to 381 and 431 to 434; these read DTPGH and NKID. The G4 stretch occupies residues 431 to 434; the sequence is NKID. Positions 467–469 are G5; it reads SAM.

This sequence belongs to the TRAFAC class translation factor GTPase superfamily. Classic translation factor GTPase family. IF-2 subfamily.

It is found in the cytoplasm. Functionally, one of the essential components for the initiation of protein synthesis. Protects formylmethionyl-tRNA from spontaneous hydrolysis and promotes its binding to the 30S ribosomal subunits. Also involved in the hydrolysis of GTP during the formation of the 70S ribosomal complex. The sequence is that of Translation initiation factor IF-2 from Jannaschia sp. (strain CCS1).